The chain runs to 220 residues: Pyridoxine/pyridoxamine 5'-phosphate oxidase (220 aa).

Substrate-binding positions include 13–16 (RVEY) and lysine 77. FMN contacts are provided by residues 72–77 (RTVLCK), 87–88 (FT), lysine 94, and glutamine 116. Tyrosine 134, arginine 138, and serine 142 together coordinate substrate. FMN contacts are provided by residues 151-152 (QS) and tryptophan 197. 203–205 (RLH) lines the substrate pocket. An FMN-binding site is contributed by arginine 207.

Belongs to the pyridoxamine 5'-phosphate oxidase family. As to quaternary structure, homodimer. The cofactor is FMN.

It catalyses the reaction pyridoxamine 5'-phosphate + O2 + H2O = pyridoxal 5'-phosphate + H2O2 + NH4(+). The enzyme catalyses pyridoxine 5'-phosphate + O2 = pyridoxal 5'-phosphate + H2O2. It functions in the pathway cofactor metabolism; pyridoxal 5'-phosphate salvage; pyridoxal 5'-phosphate from pyridoxamine 5'-phosphate: step 1/1. It participates in cofactor metabolism; pyridoxal 5'-phosphate salvage; pyridoxal 5'-phosphate from pyridoxine 5'-phosphate: step 1/1. Functionally, catalyzes the oxidation of either pyridoxine 5'-phosphate (PNP) or pyridoxamine 5'-phosphate (PMP) into pyridoxal 5'-phosphate (PLP). The polypeptide is Pyridoxine/pyridoxamine 5'-phosphate oxidase (Mycolicibacterium paratuberculosis (strain ATCC BAA-968 / K-10) (Mycobacterium paratuberculosis)).